The sequence spans 282 residues: uncharacterized protein (282 aa).

Disordered regions lie at residues Met1–Glu45 and Asp201–Gly259. Basic and acidic residues predominate over residues Ser10–Thr19. Polar residues predominate over residues Ser26 to Val38. The span at Asp201–Ser237 shows a compositional bias: basic and acidic residues.

This is an uncharacterized protein from Ostreid herpesvirus 1 (isolate France) (OsHV-1).